Reading from the N-terminus, the 6753-residue chain is Putative histone-lysine N-methyltransferase 1 (6753 aa).

Disordered regions lie at residues 1–28 (MSENSDEGKMQKGKGNEMNEDKIICKKE), 418–458 (FGNM…GKKN), 470–522 (DTTL…CNPS), 736–1024 (DDDE…KKDK), 1487–1545 (FNNN…NTAT), and 1557–1642 (YKKV…GKSK). A compositionally biased stretch (low complexity) spans 435–449 (NNTSKNNISNNNNNM). A compositionally biased stretch (basic and acidic residues) spans 475-502 (QAKKESIKTVSKNERKNNMNKHSHDNKV). Positions 504 to 516 (KLNKRMSNKRRNN) are enriched in basic residues. Basic and acidic residues predominate over residues 739–794 (ECKKENKDNISESSKRSNNIGEKKMLHVEKSEEHDDMTSDSNKEDTKIEEGRKKSN). Residues 798 to 808 (IDVDDGEEEEN) are compositionally biased toward acidic residues. Positions 809–833 (VNNNDNNNDNNNDNDNSSDNNNNDD) are enriched in low complexity. Basic and acidic residues-rich tracts occupy residues 853–866 (EKKDVKENTDDKNL) and 885–900 (IKKDNDKKKKYEKKNI). Over residues 912–932 (RSNSSSTSTSNSSSKSKSSNC) the composition is skewed to low complexity. Composition is skewed to basic and acidic residues over residues 945 to 955 (KMDEKNSEQKK) and 964 to 975 (TCNEGKSKKDST). Composition is skewed to basic residues over residues 1002–1019 (EKKKKINNSKINKGRKGI) and 1492–1506 (KNKRTKNGKKKKNTI). Residues 1522 to 1533 (SNSHSIEVSSSE) show a composition bias toward low complexity. Residues 1566 to 1599 (KNGENKNGENKNGDIKNDDIKNDDIKNDDIRNDD) are compositionally biased toward basic and acidic residues. A compositionally biased stretch (low complexity) spans 1615 to 1632 (ESNNIDNNNSSNDSLSDV). 3 consecutive PHD-type zinc fingers follow at residues 1671 to 1728 (CYRC…CLKC), 1761 to 1819 (KNFC…CSIG), and 2510 to 2579 (KECC…CIKC). The RING-type; degenerate zinc finger occupies 1764 to 1817 (CIMCNEKYDEDDSKKWVQCDVCKFWIHLSCDKNESRNIETLSNKNIDYKCPTCS). Residues 1816-1919 (CSIGTFHDKI…KKGRVIIKNM (104 aa)) form the Bromo domain. Basic and acidic residues predominate over residues 2694-2705 (ECNKNEKKKNDN). 5 disordered regions span residues 2694–2768 (ECNK…KDTK), 3053–3072 (EMESNNNNNNNNNNSDCNNN), 4182–4254 (NEQN…LKTT), 4295–4349 (ENDE…ENEK), and 5331–5460 (NMNM…NNDK). Residues 2720–2735 (NNNNNNNGDDNNNIDN) show a composition bias toward low complexity. The segment covering 2758–2768 (NEEKKNNKDTK) has biased composition (basic and acidic residues). Residues 3057 to 3072 (NNNNNNNNNNSDCNNN) show a composition bias toward low complexity. 3 stretches are compositionally biased toward basic and acidic residues: residues 4212–4223 (SKKDMLIKKEMN), 4239–4254 (SPKKDDELRENDLKTT), and 4297–4321 (DENKEKGIKKEKNDEEKKNDAEKKK). Residues 4322–4338 (KENKKGREKSVKVRKTK) show a composition bias toward basic residues. 2 stretches are compositionally biased toward low complexity: residues 5331–5340 (NMNMLDNNMN) and 5348–5400 (ENNN…NNNN). The span at 5401-5411 (KSKKNTQKKKD) shows a compositional bias: basic residues. Low complexity predominate over residues 5416–5426 (VKINQNNSNNK). Residues 5434-5460 (SKDNEELKSDNTKNNKTKDSDGNNNDK) show a composition bias toward basic and acidic residues. The segment at 5496–5532 (YMKEKKCKNKEKNRGSKNNNIKNIKLIDMCEWKEDRN) adopts a C2HC pre-PHD-type; degenerate zinc-finger fold. The PHD-type 4; degenerate zinc finger occupies 5558-5610 (STCFLCGYNNASVYCSNEDCNVKFHLNCAFYSTVIKDPSNNPFFRYLKCFNLV). Residues 5905-5952 (NDNNNDINNNDNNNNENNNENINDNNNNNNNNNNNNNNNNSNNNNNNN) show a composition bias toward low complexity. 3 disordered regions span residues 5905–5958 (NDNN…YYHN), 6103–6133 (DCSNEENNTSDDEENENRKNENDDDNIPEHI), and 6212–6235 (KFSDNKNYASDDEEKKKKKRKNQT). Residues 6118-6133 (ENRKNENDDDNIPEHI) are compositionally biased toward basic and acidic residues. The 118-residue stretch at 6612-6729 (LRLYVKKSSI…AHEEITYDYQ (118 aa)) folds into the SET domain. Residues 6737 to 6753 (KKLICLCGSSTCLGRMN) form the Post-SET domain.

The protein belongs to the class V-like SAM-binding methyltransferase superfamily.

The catalysed reaction is L-lysyl-[histone] + S-adenosyl-L-methionine = N(6)-methyl-L-lysyl-[histone] + S-adenosyl-L-homocysteine + H(+). Its function is as follows. Probable histone methyltransferase. In Plasmodium falciparum (isolate 3D7), this protein is Putative histone-lysine N-methyltransferase 1 (SET1).